The sequence spans 173 residues: Shikimate kinase (173 aa).

11 to 16 (GTGKTS) is a binding site for ATP. T15 contributes to the Mg(2+) binding site. Residues D33, R57, and G79 each contribute to the substrate site. ATP is bound at residue R117. Substrate is bound at residue R136.

The protein belongs to the shikimate kinase family. Monomer. It depends on Mg(2+) as a cofactor.

The protein resides in the cytoplasm. The catalysed reaction is shikimate + ATP = 3-phosphoshikimate + ADP + H(+). It functions in the pathway metabolic intermediate biosynthesis; chorismate biosynthesis; chorismate from D-erythrose 4-phosphate and phosphoenolpyruvate: step 5/7. Its function is as follows. Catalyzes the specific phosphorylation of the 3-hydroxyl group of shikimic acid using ATP as a cosubstrate. This chain is Shikimate kinase, found in Thermodesulfovibrio yellowstonii (strain ATCC 51303 / DSM 11347 / YP87).